A 197-amino-acid chain; its full sequence is dCTP deaminase (197 aa).

105 to 110 (RSSIAR) contacts dCTP. E133 (proton donor/acceptor) is an active-site residue. The dCTP site is built by Y166 and Q177. A disordered region spans residues 172–197 (NKYAGQKDPKPSRLAEELSLEQLRGR). Over residues 176 to 187 (GQKDPKPSRLAE) the composition is skewed to basic and acidic residues.

It belongs to the dCTP deaminase family. Homotrimer.

It carries out the reaction dCTP + H2O + H(+) = dUTP + NH4(+). Its pathway is pyrimidine metabolism; dUMP biosynthesis; dUMP from dCTP (dUTP route): step 1/2. In terms of biological role, catalyzes the deamination of dCTP to dUTP. This chain is dCTP deaminase, found in Thermomicrobium roseum (strain ATCC 27502 / DSM 5159 / P-2).